Here is a 231-residue protein sequence, read N- to C-terminus: Nucleoside diphosphate kinase II, chloroplastic (231 aa).

The N-terminal 62 residues, 1–62, are a transit peptide targeting the chloroplast; it reads MVGATVVSKW…RNSASRRRLR (62 aa). Lysine 91, phenylalanine 139, arginine 167, threonine 173, arginine 184, and asparagine 194 together coordinate ATP. Histidine 197 (pros-phosphohistidine intermediate) is an active-site residue.

Belongs to the NDK family. As to quaternary structure, interacts with PHYA, MPK3 and MPK6. The cofactor is Mg(2+). Autophosphorylated.

It is found in the plastid. Its subcellular location is the chloroplast. The catalysed reaction is a 2'-deoxyribonucleoside 5'-diphosphate + ATP = a 2'-deoxyribonucleoside 5'-triphosphate + ADP. It carries out the reaction a ribonucleoside 5'-diphosphate + ATP = a ribonucleoside 5'-triphosphate + ADP. Its function is as follows. Major role in the synthesis of nucleoside triphosphates other than ATP. The ATP gamma phosphate is transferred to the NDP beta phosphate via a ping-pong mechanism, using a phosphorylated active-site intermediate. May activate MPK3 and MPK6. May be involved in the regulation of cellular redox state and hydrogen peroxide-mediated MAP kinase signaling. The sequence is that of Nucleoside diphosphate kinase II, chloroplastic (NDPK2) from Arabidopsis thaliana (Mouse-ear cress).